The following is an 83-amino-acid chain: Conotoxin VnMKLT1-022 (83 aa).

An N-terminal signal peptide occupies residues 1–22 (MKLMCMMIVAVLFLTAWTFVTA). Residues 23-55 (DDSINGPENRRIWEKLLSKTRDEMKNPEASKLN) constitute a propeptide that is removed on maturation. 3 disulfide bridges follow: Cys-59/Cys-74, Cys-66/Cys-78, and Cys-73/Cys-82.

It belongs to the conotoxin O1 superfamily. In terms of tissue distribution, expressed by the venom duct.

The protein resides in the secreted. The sequence is that of Conotoxin VnMKLT1-022 from Conus ventricosus (Mediterranean cone).